The chain runs to 134 residues: Seminal plasma protein PDC-109 (134 aa).

The first 25 residues, 1–25, serve as a signal peptide directing secretion; that stretch reads MALQLGLFLIWAGVSVFLQLDPVNG. The O-linked (GalNAc...) threonine glycan is linked to Thr36. Fibronectin type-II domains follow at residues 44–88 and 89–134; these read PEDE…YCAQ and RDYA…WKYC. Cystine bridges form between Cys49-Cys73, Cys63-Cys86, Cys94-Cys119, and Cys108-Cys134.

Belongs to the seminal plasma protein family. Homodimer. Post-translationally, O-linked glycan consists of Gal-GalNAc disaccharide which is modified with a sialic acid residue (macro- and/or microheterogeneity account for differences between BSP-A1 and BSP-A2). Major component of seminal plasma.

The protein resides in the secreted. In terms of biological role, could enhance the fertilizing capacity of bull spermatozoa upon interaction with heparin-like glycosaminoglycans present in the female genital tract. Exhibits both simulatory and inhibitory actions on the release of pituitary gonadotropins. In Bos taurus (Bovine), this protein is Seminal plasma protein PDC-109.